The primary structure comprises 562 residues: Lamassu protein LmuB (562 aa).

Its function is as follows. Component of antiviral defense system Lamassu type I, composed of LmuA and LmuB. Expression of Lamassu type I in B.subtilis (strain BEST7003) confers resistance to phages phi3T, SpBeta and SPR. May be an ATPase. The polypeptide is Lamassu protein LmuB (Bacillus sp. (strain NCIM 5461 / CCTCC AB 2011126 / NIO-1130)).